The following is a 182-amino-acid chain: MPLGDCNISTPDNKQNRKNQEIRVPRVRVIGSDGEMVGVLSRDEALAKAEEEGLDLVEIQPQADPPVCKIMDFGKFKFEQQKKANEAKKKTKQVEIKELKFRPVTDEGDYQIKLRNMRRFLEEGDKVKVNIRFRGREMSHQELGREMAARIEADLGEDIVIESRPRLEGRQMVMMIAPKKKI.

Residues 1-22 (MPLGDCNISTPDNKQNRKNQEI) form a disordered region.

The protein belongs to the IF-3 family. Monomer.

The protein localises to the cytoplasm. IF-3 binds to the 30S ribosomal subunit and shifts the equilibrium between 70S ribosomes and their 50S and 30S subunits in favor of the free subunits, thus enhancing the availability of 30S subunits on which protein synthesis initiation begins. The protein is Translation initiation factor IF-3 of Xanthomonas campestris pv. campestris (strain ATCC 33913 / DSM 3586 / NCPPB 528 / LMG 568 / P 25).